Consider the following 294-residue polypeptide: tRNA-cytidine(32) 2-sulfurtransferase (294 aa).

The PP-loop motif motif lies at 70–75; that stretch reads SGGKDS. Positions 145, 148, and 236 each coordinate [4Fe-4S] cluster.

The protein belongs to the TtcA family. As to quaternary structure, homodimer. Mg(2+) serves as cofactor. The cofactor is [4Fe-4S] cluster.

It localises to the cytoplasm. It catalyses the reaction cytidine(32) in tRNA + S-sulfanyl-L-cysteinyl-[cysteine desulfurase] + AH2 + ATP = 2-thiocytidine(32) in tRNA + L-cysteinyl-[cysteine desulfurase] + A + AMP + diphosphate + H(+). It participates in tRNA modification. Functionally, catalyzes the ATP-dependent 2-thiolation of cytidine in position 32 of tRNA, to form 2-thiocytidine (s(2)C32). The sulfur atoms are provided by the cysteine/cysteine desulfurase (IscS) system. The chain is tRNA-cytidine(32) 2-sulfurtransferase from Rhizobium meliloti (strain 1021) (Ensifer meliloti).